An 85-amino-acid chain; its full sequence is Small ribosomal subunit protein bS20 (85 aa).

Disordered stretches follow at residues 1-25 (MANIKSAIKRAKLSEERRAHNASIK) and 62-85 (ARKGLIHQNAASRQKSRLAKQVNA).

This sequence belongs to the bacterial ribosomal protein bS20 family.

In terms of biological role, binds directly to 16S ribosomal RNA. This Bacillus cereus (strain G9842) protein is Small ribosomal subunit protein bS20.